The primary structure comprises 252 residues: Probable truncated L-gulonolactone oxidase 7, mitochondrial (252 aa).

A mitochondrion-targeting transit peptide spans 1-102; that stretch reads MKRSMRSHLA…ELNYGVLVRY (102 aa).

Belongs to the oxygen-dependent FAD-linked oxidoreductase family.

The protein resides in the mitochondrion. It carries out the reaction L-gulono-1,4-lactone + O2 = L-ascorbate + H2O2 + H(+). Its pathway is cofactor biosynthesis; L-ascorbate biosynthesis. Functionally, may be involved in the biosynthesis of ascorbic acid. The chain is Probable truncated L-gulonolactone oxidase 7, mitochondrial from Arabidopsis thaliana (Mouse-ear cress).